A 246-amino-acid chain; its full sequence is Serine protease 1 (246 aa).

The first 15 residues, 1–15 (MKTFIFLALLGATVA), serve as a signal peptide directing secretion. The propeptide at 16-23 (FPIDDDDK) is activation peptide. The region spanning 24–244 (IVGGYTCSRN…YVSWIQQTIA (221 aa)) is the Peptidase S1 domain. 6 cysteine pairs are disulfide-bonded: cysteine 30/cysteine 160, cysteine 48/cysteine 64, cysteine 132/cysteine 233, cysteine 139/cysteine 206, cysteine 171/cysteine 185, and cysteine 196/cysteine 220. Residue histidine 63 is the Charge relay system of the active site. Glutamate 75, asparagine 77, valine 80, and glutamate 85 together coordinate Ca(2+). Aspartate 107 acts as the Charge relay system in catalysis. The active-site Charge relay system is serine 200.

It belongs to the peptidase S1 family. As to quaternary structure, interacts with SERPINA1. The cofactor is Ca(2+).

Its subcellular location is the secreted. It localises to the extracellular space. The catalysed reaction is Preferential cleavage: Arg-|-Xaa, Lys-|-Xaa.. The protein is Serine protease 1 of Canis lupus familiaris (Dog).